A 351-amino-acid polypeptide reads, in one-letter code: Probable V-type proton ATPase subunit d (351 aa).

It belongs to the V-ATPase V0D/AC39 subunit family. In terms of assembly, V-ATPase is a heteromultimeric enzyme composed of a peripheral catalytic V1 complex (components A to H) attached to an integral membrane V0 proton pore complex (components: a, c, c', c'' and d).

Functionally, subunit of the integral membrane V0 complex of vacuolar ATPase. Vacuolar ATPase is responsible for acidifying a variety of intracellular compartments in eukaryotic cells, thus providing most of the energy required for transport processes in the vacuolar system. This is Probable V-type proton ATPase subunit d from Oryza sativa subsp. japonica (Rice).